We begin with the raw amino-acid sequence, 156 residues long: 6,7-dimethyl-8-ribityllumazine synthase (156 aa).

5-amino-6-(D-ribitylamino)uracil contacts are provided by residues F22, 56–58 (AFE), and 80–82 (AVI). Residue 85–86 (ST) participates in (2S)-2-hydroxy-3-oxobutyl phosphate binding. H88 serves as the catalytic Proton donor. F113 contacts 5-amino-6-(D-ribitylamino)uracil. R127 is a binding site for (2S)-2-hydroxy-3-oxobutyl phosphate.

Belongs to the DMRL synthase family.

It catalyses the reaction (2S)-2-hydroxy-3-oxobutyl phosphate + 5-amino-6-(D-ribitylamino)uracil = 6,7-dimethyl-8-(1-D-ribityl)lumazine + phosphate + 2 H2O + H(+). Its pathway is cofactor biosynthesis; riboflavin biosynthesis; riboflavin from 2-hydroxy-3-oxobutyl phosphate and 5-amino-6-(D-ribitylamino)uracil: step 1/2. Its function is as follows. Catalyzes the formation of 6,7-dimethyl-8-ribityllumazine by condensation of 5-amino-6-(D-ribitylamino)uracil with 3,4-dihydroxy-2-butanone 4-phosphate. This is the penultimate step in the biosynthesis of riboflavin. The chain is 6,7-dimethyl-8-ribityllumazine synthase from Caldicellulosiruptor saccharolyticus (strain ATCC 43494 / DSM 8903 / Tp8T 6331).